The following is a 495-amino-acid chain: Vacuolar-processing enzyme (495 aa).

A signal peptide spans 1–32; it reads MALDRSIISKTTWYSVVLWMMVVLVRVHGAAA. A glycan (N-linked (GlcNAc...) asparagine) is linked at asparagine 138. The active site involves histidine 178. The active-site Nucleophile is the cysteine 220. A disulfide bond links cysteine 253 and cysteine 267. N-linked (GlcNAc...) asparagine glycosylation is found at asparagine 320 and asparagine 376. 2 disulfides stabilise this stretch: cysteine 431–cysteine 461 and cysteine 443–cysteine 478.

This sequence belongs to the peptidase C13 family.

Asparagine-specific endopeptidase involved in the processing of vacuolar seed protein precursors into the mature forms. This chain is Vacuolar-processing enzyme, found in Glycine max (Soybean).